The chain runs to 299 residues: Tetrahydromethanopterin S-methyltransferase subunit E (299 aa).

The next 6 membrane-spanning stretches (helical) occupy residues 57–79, 89–111, 132–154, 164–183, 227–246, and 261–283; these read AISG…AWAL, AIIV…AFLG, HIGP…AYLA, LPLV…SSTG, FCSR…IIFL, and LVTK…AVIN.

It belongs to the MtrE family. The complex is composed of 8 subunits; MtrA, MtrB, MtrC, MtrD, MtrE, MtrF, MtrG and MtrH.

The protein localises to the cell membrane. It catalyses the reaction 5-methyl-5,6,7,8-tetrahydromethanopterin + coenzyme M + 2 Na(+)(in) = 5,6,7,8-tetrahydromethanopterin + methyl-coenzyme M + 2 Na(+)(out). The protein operates within one-carbon metabolism; methanogenesis from CO(2); methyl-coenzyme M from 5,10-methylene-5,6,7,8-tetrahydromethanopterin: step 2/2. In terms of biological role, part of a complex that catalyzes the formation of methyl-coenzyme M and tetrahydromethanopterin from coenzyme M and methyl-tetrahydromethanopterin. This is an energy-conserving, sodium-ion translocating step. The protein is Tetrahydromethanopterin S-methyltransferase subunit E of Methanococcus maripaludis (strain DSM 14266 / JCM 13030 / NBRC 101832 / S2 / LL).